The sequence spans 241 residues: Uridylate kinase (241 aa).

Residue 13–16 (KVSG) coordinates ATP. Gly55 is a binding site for UMP. Residues Gly56 and Arg60 each coordinate ATP. UMP contacts are provided by residues Asp75 and 136–143 (TGNPFFTT). Positions 163, 164, 169, and 172 each coordinate ATP.

This sequence belongs to the UMP kinase family. As to quaternary structure, homohexamer.

It localises to the cytoplasm. The catalysed reaction is UMP + ATP = UDP + ADP. Its pathway is pyrimidine metabolism; CTP biosynthesis via de novo pathway; UDP from UMP (UMPK route): step 1/1. Inhibited by UTP. In terms of biological role, catalyzes the reversible phosphorylation of UMP to UDP. The protein is Uridylate kinase of Parvibaculum lavamentivorans (strain DS-1 / DSM 13023 / NCIMB 13966).